The following is a 747-amino-acid chain: Transcription factor phm2 (747 aa).

The segment at residues 21–50 is a DNA-binding region (zn(2)-C6 fungal-type); the sequence is CNACRKRKRVRCDRLHPCSNCASRGLGSTC. Disordered stretches follow at residues 112–150 and 414–436; these read GLQNQGSDARSDARCQPTPLSSETEFEYPVAPSPSDHGS and TAEPRNLYDTDFDEDSSALPESR.

The protein localises to the nucleus. In terms of biological role, transcription factor that regulates the expression of the gene cluster that mediates the biosynthesis of the trans-fused decalin-containing tetramic acid phomasetin. In Pyrenochaetopsis sp, this protein is Transcription factor phm2.